The chain runs to 666 residues: Phosphoenolpyruvate carboxykinase (ATP) (666 aa).

2 disordered regions span residues 1-68 (MATP…AHSP) and 91-132 (ASLT…HPAA). The segment covering 48–58 (APTTPNRSAPT) has biased composition (polar residues). A compositionally biased stretch (low complexity) spans 109 to 123 (KGEAAAQGAPSTPRA). Residue 364–371 (GLSGTGKT) participates in ATP binding.

This sequence belongs to the phosphoenolpyruvate carboxykinase (ATP) family.

The protein resides in the cytoplasm. It catalyses the reaction oxaloacetate + ATP = phosphoenolpyruvate + ADP + CO2. The protein operates within carbohydrate biosynthesis; gluconeogenesis. In Zea mays (Maize), this protein is Phosphoenolpyruvate carboxykinase (ATP).